The sequence spans 612 residues: Dihydroxy-acid dehydratase (612 aa).

Residue Asp-81 participates in Mg(2+) binding. Residue Cys-122 coordinates [2Fe-2S] cluster. Residues Asp-123 and Lys-124 each coordinate Mg(2+). Lys-124 is modified (N6-carboxylysine). [2Fe-2S] cluster is bound at residue Cys-193. Glu-489 is a Mg(2+) binding site. The Proton acceptor role is filled by Ser-515.

It belongs to the IlvD/Edd family. Homodimer. Requires [2Fe-2S] cluster as cofactor. Mg(2+) serves as cofactor.

The catalysed reaction is (2R)-2,3-dihydroxy-3-methylbutanoate = 3-methyl-2-oxobutanoate + H2O. It carries out the reaction (2R,3R)-2,3-dihydroxy-3-methylpentanoate = (S)-3-methyl-2-oxopentanoate + H2O. Its pathway is amino-acid biosynthesis; L-isoleucine biosynthesis; L-isoleucine from 2-oxobutanoate: step 3/4. It functions in the pathway amino-acid biosynthesis; L-valine biosynthesis; L-valine from pyruvate: step 3/4. Functions in the biosynthesis of branched-chain amino acids. Catalyzes the dehydration of (2R,3R)-2,3-dihydroxy-3-methylpentanoate (2,3-dihydroxy-3-methylvalerate) into 2-oxo-3-methylpentanoate (2-oxo-3-methylvalerate) and of (2R)-2,3-dihydroxy-3-methylbutanoate (2,3-dihydroxyisovalerate) into 2-oxo-3-methylbutanoate (2-oxoisovalerate), the penultimate precursor to L-isoleucine and L-valine, respectively. The chain is Dihydroxy-acid dehydratase from Ectopseudomonas mendocina (strain ymp) (Pseudomonas mendocina).